Consider the following 106-residue polypeptide: MNDSEFHRLADALWLTIEERLDSWDGDSDIDCEINGGVLTLSFENGSKIIINRQEPLHQVWLATKQGGYHFDLKGDEWICDRSGETFWDLLGQAATQQAGEKVSFR.

This sequence belongs to the frataxin family.

Involved in iron-sulfur (Fe-S) cluster assembly. May act as a regulator of Fe-S biogenesis. This chain is Iron-sulfur cluster assembly protein CyaY, found in Salmonella schwarzengrund (strain CVM19633).